We begin with the raw amino-acid sequence, 249 residues long: MAAGSTIDALGQFELHPVLGGLGESLRFSQSPVMMIVASVLVLAFLYVGMRPAAIVPGRLQAAAEICYDFIHDMAVDTIGPEGRAFFPFIFTLFFFILAGNYLGLLPFSFAFTSHIAVTLALALLVFVLAVIVSLKAQGPKFFAHFMPAGAPVALAPLLVPIEILSFLSRPVSLSIRLFANMVAGHVMLEMFAAFTIMLAGLGLFGDVLAVGPVVINVALMALELLVGALQAYVFAILTCIYLREAVAH.

The next 6 helical transmembrane spans lie at 30-50, 86-106, 115-135, 142-162, 191-211, and 218-238; these read QSPV…YVGM, FFPF…LGLL, HIAV…IVSL, FFAH…LVPI, MFAA…VLAV, and VALM…FAIL.

This sequence belongs to the ATPase A chain family. F-type ATPases have 2 components, CF(1) - the catalytic core - and CF(0) - the membrane proton channel. CF(1) has five subunits: alpha(3), beta(3), gamma(1), delta(1), epsilon(1). CF(0) has three main subunits: a(1), b(2) and c(9-12). The alpha and beta chains form an alternating ring which encloses part of the gamma chain. CF(1) is attached to CF(0) by a central stalk formed by the gamma and epsilon chains, while a peripheral stalk is formed by the delta and b chains.

The protein resides in the cell inner membrane. Key component of the proton channel; it plays a direct role in the translocation of protons across the membrane. The chain is ATP synthase subunit a from Gluconacetobacter diazotrophicus (strain ATCC 49037 / DSM 5601 / CCUG 37298 / CIP 103539 / LMG 7603 / PAl5).